A 349-amino-acid polypeptide reads, in one-letter code: MQPFDSGHDDLVHDVVYDFYGRHVATCSSDQHIKVFKLDKDTSNWELSDSWRAHDSSIVAIDWASPEYGRIIASASYDKTVKLWEEDPDQEECSGRRWNKLCTLNDSKGSLYSVKFAPAHLGLKLACLGNDGILRLYDALEPSDLRSWTLTSEMKVLSIPPANHLQSDFCLSWCPSRFSPEKLAVSALEQAIIYQRGKDGKLHVAAKLPGHKSLIRSISWAPSIGRWYQLIATGCKDGRIRIFKITEKLSPLASEESLTNSNMFDNSADVDMDAQGRSDSNTEEKAELQSNLQVELLSEHDDHNGEVWSVSWNLTGTILSSAGDDGKVRLWKATYSNEFKCMSVITAQQ.

WD repeat units follow at residues 7 to 46 (GHDD…SNWE), 53 to 94 (AHDS…EECS), 106 to 147 (DSKG…DLRS), 153 to 192 (EMKV…EQAI), and 210 to 253 (GHKS…SPLA). S257 carries the post-translational modification Phosphoserine. Positions 263–285 (MFDNSADVDMDAQGRSDSNTEEK) are disordered. Over residues 274–285 (AQGRSDSNTEEK) the composition is skewed to basic and acidic residues. A WD 6 repeat occupies 302-341 (DHNGEVWSVSWNLTGTILSSAGDDGKVRLWKATYSNEFKC).

Belongs to the WD repeat SEC13 family. As to quaternary structure, component of the nuclear pore complex (NPC). NPC constitutes the exclusive means of nucleocytoplasmic transport. NPCs allow the passive diffusion of ions and small molecules and the active, nuclear transport receptor-mediated bidirectional transport of macromolecules such as proteins, RNAs, ribonucleoparticles (RNPs), and ribosomal subunits across the nuclear envelope. Due to its 8-fold rotational symmetry, all subunits are present with 8 copies or multiples thereof. SEH1 is part of the heptameric 0.5 MDa autoassembling NUP84 NPC subcomplex (NUP84, NUP85, NUP120, NUP133, NUP145C, SEC13 and SEH1). Component of the SEA complex composed of at least IML1/SEA1, RTC1/SEA2, MTC5/SEA3, NPR2, NPR3, SEA4, SEC13 and SEH1.

The protein localises to the nucleus. The protein resides in the nuclear pore complex. Its subcellular location is the nucleus membrane. It localises to the vacuole membrane. Its function is as follows. Functions as a component of the nuclear pore complex (NPC). NPC components, collectively referred to as nucleoporins (NUPs), can play the role of both NPC structural components and of docking or interaction partners for transiently associated nuclear transport factors. Involved in nuclear poly(A)+ RNA export and NPC biogenesis. It is also required for normal nuclear morphology. Component of the SEA complex which coats the vacuolar membrane and is involved in intracellular trafficking, autophagy, response to nitrogen starvation, and amino acid biogenesis. The polypeptide is Nucleoporin SEH1 (SEH1) (Saccharomyces cerevisiae (strain ATCC 204508 / S288c) (Baker's yeast)).